The sequence spans 113 residues: UPF0482 protein YnfB (113 aa).

Residues 1-28 form the signal peptide; sequence MKITLSKRIGLLAILLPCALALSTTVHA.

Belongs to the UPF0482 family.

This chain is UPF0482 protein YnfB, found in Escherichia coli O8 (strain IAI1).